The primary structure comprises 276 residues: MPIDSLPPLREVINTYGLQAHKSLGQNFLFDLNLTSKIAHQAGNIEGKPVIEVGPGPGGLTRALLAKGAIVTAIERDERCIPALLEIEKHYPQKLKIICNDALKQDFSKLFEISPEKPRIIANLPYNIGTQLLLNWLLAEPWPPFYESMTLMFQREVAQRITAKPQSAHYGRLSVLTGWRTIAKIAFDVPPQAFIPAPKITSSVVHIIPRTQPLTCSAQKLSFVTKTAFGQRRKMLRQNLKTLGGEVLLEKAGIDETRRAETLEISEFVTLANLVI.

6 residues coordinate S-adenosyl-L-methionine: Asn27, Leu29, Gly54, Glu75, Asp101, and Asn123.

It belongs to the class I-like SAM-binding methyltransferase superfamily. rRNA adenine N(6)-methyltransferase family. RsmA subfamily.

It localises to the cytoplasm. The catalysed reaction is adenosine(1518)/adenosine(1519) in 16S rRNA + 4 S-adenosyl-L-methionine = N(6)-dimethyladenosine(1518)/N(6)-dimethyladenosine(1519) in 16S rRNA + 4 S-adenosyl-L-homocysteine + 4 H(+). Specifically dimethylates two adjacent adenosines (A1518 and A1519) in the loop of a conserved hairpin near the 3'-end of 16S rRNA in the 30S particle. May play a critical role in biogenesis of 30S subunits. The polypeptide is Ribosomal RNA small subunit methyltransferase A (Bartonella henselae (strain ATCC 49882 / DSM 28221 / CCUG 30454 / Houston 1) (Rochalimaea henselae)).